The primary structure comprises 610 residues: UvrABC system protein C (610 aa).

The region spanning 16–94 is the GIY-YIG domain; that stretch reads SQPGVYRMYD…IKLYQPRYNV (79 aa). Positions 204-239 constitute a UVR domain; the sequence is QQVLTQLISRMEEASRLLHFEDAARIRDQIQAVRRV.

It belongs to the UvrC family. Interacts with UvrB in an incision complex.

It is found in the cytoplasm. Functionally, the UvrABC repair system catalyzes the recognition and processing of DNA lesions. UvrC both incises the 5' and 3' sides of the lesion. The N-terminal half is responsible for the 3' incision and the C-terminal half is responsible for the 5' incision. The sequence is that of UvrABC system protein C from Yersinia enterocolitica serotype O:8 / biotype 1B (strain NCTC 13174 / 8081).